The following is a 146-amino-acid chain: UPF0178 protein BCQ_2874 (146 aa).

This sequence belongs to the UPF0178 family.

This Bacillus cereus (strain Q1) protein is UPF0178 protein BCQ_2874.